Consider the following 131-residue polypeptide: UPF0251 protein MMP0619 (131 aa).

Belongs to the UPF0251 family.

This is UPF0251 protein MMP0619 from Methanococcus maripaludis (strain DSM 14266 / JCM 13030 / NBRC 101832 / S2 / LL).